The primary structure comprises 951 residues: Sodium/potassium exporting P-type ATPase 1 (951 aa).

The Cytoplasmic segment spans residues 1 to 57 (MMGANSTEWHGQSVEQVTELLGTDVERGLKESVVGQLQKQFGPNELKGQRGVNPWKV). Residues 58 to 78 (LLAQFTNGLTVILLIATVVSF) traverse the membrane as a helical segment. Residues 79–82 (AVQD) are Extracellular-facing. Residues 83–103 (HAEGGVLAFVIIFNASVGFVQ) form a helical membrane-spanning segment. The Cytoplasmic portion of the chain corresponds to 104-247 (EYRAEKTMDA…TPMQKRLNRM (144 aa)). Residues 248–268 (AYILFGISLVLAVIVFAVNKF) form a helical membrane-spanning segment. Over 269–273 (EFNTD) the chain is Extracellular. The helical transmembrane segment at 274 to 294 (IIIYAVSLGIAVIPEGLIAVI) threads the bilayer. Over 295–717 (TIVMALGVRR…GRRIFSNIRK (423 aa)) the chain is Cytoplasmic. D330 (4-aspartylphosphate intermediate) is an active-site residue. Mg(2+) is bound by residues D330 and T332. Residues T332, E414, K467, R511, T575, G576, D577, R636, and K642 each contribute to the ATP site. Position 661 (D661) interacts with Mg(2+). N664 contributes to the ATP binding site. A helical transmembrane segment spans residues 718–738 (FILHLVSTNVGEVIVLIIGLA). The Extracellular portion of the chain corresponds to 739-743 (FKDRN). Residues 744 to 764 (GVSVFPLAPVQILFMNMVTST) form a helical membrane-spanning segment. At 765 to 799 (PPAMALGVEAASKDTMKVPPHTKGLFGKEVLADMM) the chain is on the cytoplasmic side. The helical transmembrane segment at 800 to 820 (VYGIIMGSLILVDWVLVIYAF) threads the bilayer. The Extracellular portion of the chain corresponds to 821-840 (GDSQLGLECNSDRMLNECNT). A helical membrane pass occupies residues 841–861 (VFRARSTIMVALIWMLLLHAY). Topologically, residues 862–885 (NCRHPRASLFTAEGGGASKLFSNR) are cytoplasmic. A helical transmembrane segment spans residues 886 to 906 (LLVWSVLLGSLMPIPTVYIPT). Residues 907–916 (LNTKIFKQET) lie on the Extracellular side of the membrane. Residues 917–937 (ISWEWSIVVVSVVAFFFLSEL) form a helical membrane-spanning segment. Residues 938–951 (YKLIKRNVMTSRVI) lie on the Cytoplasmic side of the membrane.

Belongs to the cation transport ATPase (P-type) (TC 3.A.3) family. Type IID subfamily. Mg(2+) serves as cofactor. Post-translationally, the active site is phosphorylated in presence of sodium or potassium and in conditions of higher pH. Not phosphorylated in presence of calcium ions.

Its subcellular location is the cell membrane. The catalysed reaction is Na(+)(in) + ATP + H2O = Na(+)(out) + ADP + phosphate + H(+). It carries out the reaction K(+)(in) + ATP + H2O = K(+)(out) + ADP + phosphate + H(+). Catalyzes the hydrolysis of ATP coupled with the export of sodium and potassium from the cell. Appears to export potassium more efficiently than sodium. May transport other cations such as lithium. Sodium/potassium efflux ATPases are involved in salt tolerance and maintaining the membrane potential across the plasma membrane in high salinity (Na+) or alkaline (K+) environments. This Marchantia polymorpha (Common liverwort) protein is Sodium/potassium exporting P-type ATPase 1.